Here is a 983-residue protein sequence, read N- to C-terminus: Ephrin type-A receptor 3 (983 aa).

A signal peptide spans 1 to 19 (MDRRRLPLLLLCAALGSAG). At 20 to 540 (RLSARPGNEV…SFSISSENSQ (521 aa)) the chain is on the extracellular side. An Eph LBD domain is found at 28–206 (EVNLLDSKTI…YFKKCPFTVK (179 aa)). N-linked (GlcNAc...) asparagine glycosylation is found at N231, N336, N390, N403, and N492. Fibronectin type-III domains are found at residues 324 to 434 (PPSA…TNQA) and 435 to 530 (APSP…TSPD). The helical transmembrane segment at 541–564 (VVMIAISAAVAIILLTVVVYVLIG) threads the bilayer. Residues 565–983 (RFCGYKKSKH…THTKNSPVPV (419 aa)) are Cytoplasmic-facing. Residues Y596 and Y602 each carry the phosphotyrosine; by autocatalysis modification. Residues 621 to 882 (ISIDKVVGAG…QIVSILDKLI (262 aa)) form the Protein kinase domain. ATP is bound by residues 628–633 (GAGEFG), K653, and 700–706 (EYMENGS). Y701 carries the phosphotyrosine; by autocatalysis modification. The Proton acceptor role is filled by D746. 750–751 (RN) is an ATP binding site. Residue Y779 is modified to Phosphotyrosine; by autocatalysis. Positions 911–975 (SAFRTAGDWL…VSSIKTLETH (65 aa)) constitute an SAM domain. Positions 981-983 (VPV) match the PDZ-binding motif.

This sequence belongs to the protein kinase superfamily. Tyr protein kinase family. Ephrin receptor subfamily. Heterotetramer upon binding of the ligand. The heterotetramer is composed of an ephrin dimer and a receptor dimer. Oligomerization is probably required to induce biological responses. Post-translationally, autophosphorylates upon activation by EFNA5. In terms of tissue distribution, highly expressed in the developing brain and embryonic tissues. In adult, the greatest levels of expression occur in the brain. It is expressed in a graded manner across the retina with the highest expression at its temporal pole. Detectable in all other adult tissues examined, except the liver.

It localises to the cell membrane. The catalysed reaction is L-tyrosyl-[protein] + ATP = O-phospho-L-tyrosyl-[protein] + ADP + H(+). In terms of biological role, receptor tyrosine kinase which binds promiscuously membrane-bound ephrin family ligands residing on adjacent cells, leading to contact-dependent bidirectional signaling into neighboring cells. The signaling pathway downstream of the receptor is referred to as forward signaling while the signaling pathway downstream of the ephrin ligand is referred to as reverse signaling. Highly promiscuous for ephrin-A ligands it binds preferentially EFNA5. Upon activation by EFNA5 regulates cell-cell adhesion, cytoskeletal organization and cell migration. Plays a role in cardiac cells migration and differentiation probably through activation by EFNA1. Involved in the retinotectal mapping of neurons. May also control the segregation but not the guidance of motor and sensory axons during neuromuscular circuit development. This Gallus gallus (Chicken) protein is Ephrin type-A receptor 3 (EPHA3).